Reading from the N-terminus, the 148-residue chain is ATP synthase epsilon chain (148 aa).

It belongs to the ATPase epsilon chain family. As to quaternary structure, F-type ATPases have 2 components, CF(1) - the catalytic core - and CF(0) - the membrane proton channel. CF(1) has five subunits: alpha(3), beta(3), gamma(1), delta(1), epsilon(1). CF(0) has three main subunits: a, b and c.

The protein localises to the cell inner membrane. Its function is as follows. Produces ATP from ADP in the presence of a proton gradient across the membrane. The polypeptide is ATP synthase epsilon chain (Paracoccus denitrificans (strain Pd 1222)).